A 166-amino-acid polypeptide reads, in one-letter code: Ribosome maturation factor RimP (166 aa).

The protein belongs to the RimP family.

The protein resides in the cytoplasm. Required for maturation of 30S ribosomal subunits. This chain is Ribosome maturation factor RimP, found in Psychrobacter sp. (strain PRwf-1).